The sequence spans 611 residues: mRNA export factor GLE1 (611 aa).

Disordered stretches follow at residues 69–94 and 220–243; these read SEDE…SQIC and KIRS…EKIR. The segment covering 71–89 has biased composition (acidic residues); it reads DEMESDEGEESDDEEEEED.

The protein belongs to the GLE1 family. As to quaternary structure, part of the nuclear pore complex (NPC). The NPC has an eight-fold symmetrical structure comprising a central transport channel and two rings, the cytoplasmic and nuclear rings, to which eight filaments are attached. The cytoplasmic filaments have loose ends, while the nuclear filaments are joined in a distal ring, forming a nuclear basket. NPCs are highly dynamic in configuration and composition, and can be devided in 3 subcomplexes, the NUP62 subcomplex, the NUP107-160 subcomplex and the NUP93 subcomplex, containing approximately 30 different nucleoporin proteins.

The protein resides in the nucleus envelope. Its subcellular location is the nucleus. It is found in the nuclear pore complex. Required for seed viability. The polypeptide is mRNA export factor GLE1 (Arabidopsis thaliana (Mouse-ear cress)).